Here is a 73-residue protein sequence, read N- to C-terminus: MAIKEWIITQLSKLTKNKITEESLFSEIGIDSLDLVEHVSDLEQHFDIEISDEELLNIKKVNDIIVLIEQKSK.

A Carrier domain is found at 1 to 72 (MAIKEWIITQ…DIIVLIEQKS (72 aa)). Serine 32 carries the post-translational modification O-(pantetheine 4'-phosphoryl)serine.

4'-phosphopantetheine is transferred from CoA to a specific serine of the apo-ACP-like protein.

The protein operates within lipid metabolism; fatty acid biosynthesis. Its function is as follows. Carrier of the growing fatty acid chain in fatty acid biosynthesis. This Mycoplasmopsis pulmonis (strain UAB CTIP) (Mycoplasma pulmonis) protein is Acyl carrier protein homolog.